Consider the following 344-residue polypeptide: Ferrochelatase (344 aa).

Fe cation-binding residues include His196 and Glu277.

The protein belongs to the ferrochelatase family.

It localises to the cytoplasm. It carries out the reaction heme b + 2 H(+) = protoporphyrin IX + Fe(2+). It functions in the pathway porphyrin-containing compound metabolism; protoheme biosynthesis; protoheme from protoporphyrin-IX: step 1/1. Functionally, catalyzes the ferrous insertion into protoporphyrin IX. The polypeptide is Ferrochelatase (Synechococcus sp. (strain JA-2-3B'a(2-13)) (Cyanobacteria bacterium Yellowstone B-Prime)).